The following is a 337-amino-acid chain: Cytoskeleton protein RodZ (337 aa).

The Cytoplasmic portion of the chain corresponds to 1-111; that stretch reads MNTEATHDQN…LGKRRKKRDG (111 aa). The region spanning 19-71 is the HTH cro/C1-type domain; the sequence is LRNAREQLGLSQQAVAERLCLKVSTVRDIEEDKAPADLASTFLRGYIRSYARL. Residues 30–49 constitute a DNA-binding region (H-T-H motif); it reads QQAVAERLCLKVSTVRDIEE. Residues 112–132 traverse the membrane as a helical; Signal-anchor for type II membrane protein segment; the sequence is WLMTFTWLVLFVVVGLTGAWW. Residues 133-337 are Periplasmic-facing; it reads WQNHKAQQEE…TLNAEQSPAQ (205 aa). The interval 155-220 is disordered; sequence NAGGDSAQSV…QNAVVAPSQA (66 aa). Over residues 160-192 the composition is skewed to polar residues; that stretch reads SAQSVPLDTSEAASQDSTPAPTAPVDSTATNAV. Residues 193-217 show a composition bias toward low complexity; it reads PQTPDASATTTAPAADAQQNAVVAP.

It belongs to the RodZ family.

The protein localises to the cell inner membrane. Functionally, cytoskeletal protein that is involved in cell-shape control through regulation of the length of the long axis. This Citrobacter koseri (strain ATCC BAA-895 / CDC 4225-83 / SGSC4696) protein is Cytoskeleton protein RodZ.